A 377-amino-acid polypeptide reads, in one-letter code: uncharacterized protein (377 aa).

A coiled-coil region spans residues 309–375 (NIISVDKIKE…ISNLNKKLKK (67 aa)).

It belongs to the mimivirus L5 family.

This is an uncharacterized protein from Acanthamoeba polyphaga (Amoeba).